A 182-amino-acid polypeptide reads, in one-letter code: Ribosome-recycling factor (182 aa).

Belongs to the RRF family.

It is found in the cytoplasm. In terms of biological role, responsible for the release of ribosomes from messenger RNA at the termination of protein biosynthesis. May increase the efficiency of translation by recycling ribosomes from one round of translation to another. The protein is Ribosome-recycling factor of Gloeothece citriformis (strain PCC 7424) (Cyanothece sp. (strain PCC 7424)).